The primary structure comprises 130 residues: Small ribosomal subunit protein uS9 (130 aa).

Belongs to the universal ribosomal protein uS9 family.

This chain is Small ribosomal subunit protein uS9, found in Bacillus anthracis (strain A0248).